Reading from the N-terminus, the 349-residue chain is Nicotinate-nucleotide--dimethylbenzimidazole phosphoribosyltransferase (349 aa).

The active-site Proton acceptor is E316.

It belongs to the CobT family.

It carries out the reaction 5,6-dimethylbenzimidazole + nicotinate beta-D-ribonucleotide = alpha-ribazole 5'-phosphate + nicotinate + H(+). It participates in nucleoside biosynthesis; alpha-ribazole biosynthesis; alpha-ribazole from 5,6-dimethylbenzimidazole: step 1/2. Functionally, catalyzes the synthesis of alpha-ribazole-5'-phosphate from nicotinate mononucleotide (NAMN) and 5,6-dimethylbenzimidazole (DMB). The sequence is that of Nicotinate-nucleotide--dimethylbenzimidazole phosphoribosyltransferase from Photorhabdus laumondii subsp. laumondii (strain DSM 15139 / CIP 105565 / TT01) (Photorhabdus luminescens subsp. laumondii).